Consider the following 587-residue polypeptide: Tectonic-1 (587 aa).

The signal sequence occupies residues 1–22; the sequence is MRPRGLPPLLVVLLGCWASVSA. N-linked (GlcNAc...) asparagine glycosylation is present at Asn-36. The interval 46–68 is disordered; it reads GTFPSTRPPGTPRAPGPSSGPRP. Pro residues predominate over residues 51-68; sequence TRPPGTPRAPGPSSGPRP. Asn-295 and Asn-528 each carry an N-linked (GlcNAc...) asparagine glycan.

The protein belongs to the tectonic family. As to quaternary structure, part of the tectonic-like complex (also named B9 complex).

It is found in the cytoplasm. The protein resides in the cytoskeleton. The protein localises to the cilium basal body. It localises to the secreted. Functionally, component of the tectonic-like complex, a complex localized at the transition zone of primary cilia and acting as a barrier that prevents diffusion of transmembrane proteins between the cilia and plasma membranes. Regulator of Hedgehog (Hh), required for both activation and inhibition of the Hh pathway in the patterning of the neural tube. During neural tube development, it is required for formation of the most ventral cell types and for full Hh pathway activation. Functions in Hh signal transduction to fully activate the pathway in the presence of high Hh levels and to repress the pathway in the absence of Hh signals. Modulates Hh signal transduction downstream of SMO and RAB23. This Homo sapiens (Human) protein is Tectonic-1 (TCTN1).